Reading from the N-terminus, the 59-residue chain is DNA gyrase inhibitor YacG (59 aa).

The Zn(2+) site is built by C9, C12, C27, and C31.

Belongs to the DNA gyrase inhibitor YacG family. As to quaternary structure, interacts with GyrB. Zn(2+) serves as cofactor.

Functionally, inhibits all the catalytic activities of DNA gyrase by preventing its interaction with DNA. Acts by binding directly to the C-terminal domain of GyrB, which probably disrupts DNA binding by the gyrase. The sequence is that of DNA gyrase inhibitor YacG from Geotalea daltonii (strain DSM 22248 / JCM 15807 / FRC-32) (Geobacter daltonii).